A 352-amino-acid polypeptide reads, in one-letter code: C-C chemokine receptor type 5 (352 aa).

Over 1–30 (MDYQVSSPTYDIDYYTSEPCQKINVKQIAA) the chain is Extracellular. Residue Tyr-3 is modified to Sulfotyrosine. Residues Ser-6 and Ser-7 are each glycosylated (O-linked (GalNAc...) serine). 3 positions are modified to sulfotyrosine: Tyr-10, Tyr-14, and Tyr-15. Cystine bridges form between Cys-20/Cys-269 and Cys-101/Cys-178. The chain crosses the membrane as a helical span at residues 31–58 (RLLPPLYSLVFIFGFVGNILVVLILINC). The Cytoplasmic portion of the chain corresponds to 59-68 (KRLKSMTDIY). A helical transmembrane segment spans residues 69–89 (LLNLAISDLLFLLTVPFWAHY). At 90-102 (AAAQWDFGNTMCQ) the chain is on the extracellular side. A helical transmembrane segment spans residues 103–124 (LLTGLYFIGFFSGIFFIILLTI). The Cytoplasmic portion of the chain corresponds to 125-141 (DRYLAIVHAVFALKART). The chain crosses the membrane as a helical span at residues 142–166 (VTFGVVTSVITWVVAVFASLPRIIF). Over 167 to 198 (TRSQREGLHYTCSSHFPYSQYQFWKNFQTLKI) the chain is Extracellular. Residues 199–218 (VILGLVLPLLVMVICYSGIL) traverse the membrane as a helical segment. Over 219–235 (KTLLRCRNEKKRHRAVR) the chain is Cytoplasmic. The chain crosses the membrane as a helical span at residues 236-260 (LIFTIMIVYFLFWAPYNIVLLLNTF). Residues 261–277 (QEFFGLNNCSSSNRLDQ) lie on the Extracellular side of the membrane. The helical transmembrane segment at 278 to 301 (AMQVTETLGMTHCCINPIIYAFVG) threads the bilayer. Topologically, residues 302 to 352 (EKFRNYLLVFFQKHIAKRFCKCCSIFQQEAPERASSVYTRSTGEQETSVGL) are cytoplasmic. Residues Cys-321, Cys-323, and Cys-324 are each lipidated (S-palmitoyl cysteine). Residues Ser-336, Ser-337, Ser-342, and Ser-349 each carry the phosphoserine; by BARK1 modification.

This sequence belongs to the G-protein coupled receptor 1 family. Interacts with PRAF2. Efficient ligand binding to CCL3/MIP-1alpha and CCL4/MIP-1beta requires sulfation, O-glycosylation and sialic acid modifications. Glycosylation on Ser-6 is required for efficient binding of CCL4. Interacts with GRK2. Interacts with ARRB1 and ARRB2. Interacts with CNIH4. Interacts with S100A4; this interaction stimulates T-lymphocyte chemotaxis. In terms of processing, sulfated on at least 2 of the N-terminal tyrosines. Sulfation is required for efficient binding of the chemokines, CCL3 and CCL4. Post-translationally, palmitoylation in the C-terminal is important for cell surface expression. Phosphorylation on serine residues in the C-terminal is stimulated by binding CC chemokines especially by APO-RANTES. In terms of processing, O-glycosylated, but not N-glycosylated. Ser-6 appears to be the major site even if Ser-7 may be also O-glycosylated. Also sialylated glycans present which contribute to chemokine binding. Thr-16 and Ser-17 may also be glycosylated and, if so, with small moieties such as a T-antigen.

It is found in the cell membrane. Functionally, receptor for a number of inflammatory CC-chemokines including CCL3/MIP-1-alpha, CCL4/MIP-1-beta and RANTES and subsequently transduces a signal by increasing the intracellular calcium ion level. May play a role in the control of granulocytic lineage proliferation or differentiation. Participates in T-lymphocyte migration to the infection site by acting as a chemotactic receptor. The polypeptide is C-C chemokine receptor type 5 (CCR5) (Chlorocebus tantalus (Tantalus monkey)).